The following is a 351-amino-acid chain: Rhodopsin (351 aa).

Residues 1-36 are Extracellular-facing; the sequence is MNGTEGPFFYIPMVNTTGIVRSPYEYPQYYLVNPAA. N-linked (GlcNAc...) asparagine glycans are attached at residues Asn-2 and Asn-15. A helical membrane pass occupies residues 37–61; it reads YAILGAYMFFLIIVGFPVNFMTLYV. At 62-73 the chain is on the cytoplasmic side; the sequence is TLEHKKLRTPLN. Residues 74-96 form a helical membrane-spanning segment; sequence YILLNLAVADLFMVIGGFTTTMY. At 97 to 110 the chain is on the extracellular side; sequence TSMHGYFVLGRLGC. Cys-110 and Cys-187 form a disulfide bridge. Residues 111 to 133 form a helical membrane-spanning segment; it reads NLEGFFATLGGMISLWSLAVLAI. A 'Ionic lock' involved in activated form stabilization motif is present at residues 134 to 136; it reads ERW. Topologically, residues 134–152 are cytoplasmic; it reads ERWVVVCKPISNFRFGENH. The helical transmembrane segment at 153–173 threads the bilayer; that stretch reads AIMGVSLTWGMALACTVPPLV. The Extracellular portion of the chain corresponds to 174–202; that stretch reads GWSRYIPEGMQCSCGIDYYTRAEGFNNES. Asn-200 carries an N-linked (GlcNAc...) asparagine glycan. A helical membrane pass occupies residues 203–224; the sequence is FVLYMFFCHFTIPLTIIFFCYG. Residues 225-252 lie on the Cytoplasmic side of the membrane; the sequence is RLLCAVKEAAAAQQESETTQRAEREVTR. The chain crosses the membrane as a helical span at residues 253–274; that stretch reads MVIIMVIGFLVCWLPYASVAWF. At 275–286 the chain is on the extracellular side; it reads IFTHQGSEFGPL. A helical membrane pass occupies residues 287–308; that stretch reads FMTIPAFFAKSSSIYNPMIYIC. N6-(retinylidene)lysine is present on Lys-296. Topologically, residues 309–351 are cytoplasmic; it reads MNKQFRHCMITTLFCGKNPFEGEEEGASSTKTEASSASSVSPA. The S-palmitoyl cysteine moiety is linked to residue Cys-323. The tract at residues 330–351 is disordered; that stretch reads GEEEGASSTKTEASSASSVSPA. Residues 335–351 show a composition bias toward low complexity; that stretch reads ASSTKTEASSASSVSPA.

It belongs to the G-protein coupled receptor 1 family. Opsin subfamily. Post-translationally, phosphorylated on some or all of the serine and threonine residues present in the C-terminal region. In terms of processing, contains one covalently linked retinal chromophore.

The protein localises to the membrane. Its subcellular location is the cell projection. It is found in the cilium. It localises to the photoreceptor outer segment. Its function is as follows. Photoreceptor required for image-forming vision at low light intensity. While most salt water fish species use retinal as chromophore, most freshwater fish use 3-dehydroretinal, or a mixture of retinal and 3-dehydroretinal. Light-induced isomerization of 11-cis to all-trans retinal triggers a conformational change that activates signaling via G-proteins. Subsequent receptor phosphorylation mediates displacement of the bound G-protein alpha subunit by arrestin and terminates signaling. This chain is Rhodopsin (rho), found in Sargocentron diadema (Crown squirrelfish).